The chain runs to 907 residues: Eukaryotic translation initiation factor 4 gamma 2 (907 aa).

Position 1 is an N-acetylmethionine (Met1). The tract at residues 1–71 is disordered; the sequence is MESAIAEGGA…SAANNSANEK (71 aa). At Ser11 the chain carries Phosphoserine. The 231-residue stretch at 78–308 folds into the MIF4G domain; that stretch reads FRKVRGILNK…QDTVELREHH (231 aa). Thr89 carries the post-translational modification Phosphothreonine. Arg360 carries the post-translational modification Omega-N-methylarginine. Ser395 carries the phosphoserine modification. At Lys431 the chain carries N6-methyllysine. Residue Ser443 is modified to Phosphoserine. The segment at 498-541 is disordered; that stretch reads PPSAQPPRTQTPPLGQTPQLGLKTNPPLIQEKPAKTSKKPPPSK. Residues 503–516 show a composition bias toward polar residues; that stretch reads PPRTQTPPLGQTPQ. Position 505 is an omega-N-methylarginine (Arg505). Thr508 and Thr514 each carry phosphothreonine. In terms of domain architecture, MI spans 543-666; it reads ELLKLTETVV…SISELAQPLE (124 aa). Lys575 is covalently cross-linked (Glycyl lysine isopeptide (Lys-Gly) (interchain with G-Cter in SUMO2)). The 185-residue stretch at 720 to 904 folds into the W2 domain; sequence EGKGLSFLFP…ETAEEEESEE (185 aa). Phosphoserine is present on Ser902.

This sequence belongs to the eukaryotic initiation factor 4G family. As to quaternary structure, interacts with the serine/threonine protein kinases MKNK1 and MKNK2. Binds EIF4A and EIF3. Interacts with MIF4GD. Interacts with DAZAP2. Post-translationally, phosphorylation; hyperphosphorylated during mitosis.

Functionally, appears to play a role in the switch from cap-dependent to IRES-mediated translation during mitosis, apoptosis and viral infection. Cleaved by some caspases and viral proteases. The polypeptide is Eukaryotic translation initiation factor 4 gamma 2 (Oryctolagus cuniculus (Rabbit)).